Here is a 549-residue protein sequence, read N- to C-terminus: Guanine nucleotide-binding protein-like 3 (549 aa).

A compositionally biased stretch (basic residues) spans 1–45 (MKRPKLKKASKRMTCHKRYKIQKKVREHHRKLRKEAKKRGHKKPR). Disordered regions lie at residues 1–56 (MKRP…SAPF) and 73–104 (ELKQQQKLDRQKELEKKRKLETNPDIKPSNVE). The interval 2–46 (KRPKLKKASKRMTCHKRYKIQKKVREHHRKLRKEAKKRGHKKPRK) is basic. The stretch at 56–95 (FKEALLREAELRKQRLEELKQQQKLDRQKELEKKRKLETN) forms a coiled coil. Basic and acidic residues predominate over residues 73–96 (ELKQQQKLDRQKELEKKRKLETNP). Position 79 is an N6-acetyllysine (lysine 79). Glycyl lysine isopeptide (Lys-Gly) (interchain with G-Cter in SUMO2) cross-links involve residues lysine 91 and lysine 99. Phosphoserine is present on serine 101. Glycyl lysine isopeptide (Lys-Gly) (interchain with G-Cter in SUMO2) cross-links involve residues lysine 114, lysine 179, lysine 196, lysine 253, lysine 267, and lysine 275. The CP-type G domain occupies 131-312 (CQELKKVIEA…IIDSPSFIVS (182 aa)). 178-181 (NKSD) serves as a coordination point for GTP. 261-268 (GFPNVGKS) serves as a coordination point for GTP. The intermediate stretch occupies residues 282–456 (VGVSMGLTRS…HLANSILFQS (175 aa)). 305–308 (DSPS) contributes to the GTP binding site. Positions 465–543 (EEKDIHEELP…KIIEEDDAYD (79 aa)) are acidic. The segment covering 474–483 (PKRKERKQEE) has biased composition (basic and acidic residues). The interval 474–532 (PKRKERKQEEREDDKDSDQETVDEEVDENSSGMFAAEETGEALSEETTAGEQSTRSFIL) is disordered. Residues 484-501 (REDDKDSDQETVDEEVDE) are compositionally biased toward acidic residues. Serine 490, serine 504, serine 517, and serine 529 each carry phosphoserine. Residues 518–529 (EETTAGEQSTRS) show a composition bias toward polar residues.

The protein belongs to the TRAFAC class YlqF/YawG GTPase family. Interacts with MDM2; this interaction stabilizes MDM2. Interaction with MDM2 occurs in the nucleoplasm and is triggered by a nucleolar release mechanism, such as mitosis-induced nucleolar disassembly. Indirectly interacts with TP53, via MDM2-binding. Interacts with TSC22D1 isoform 2. In terms of tissue distribution, increased levels in lung tissue in cancer patients.

It is found in the nucleus. It localises to the nucleolus. Its function is as follows. May be required to maintain the proliferative capacity of stem cells. Stabilizes MDM2 by preventing its ubiquitination, and hence proteasomal degradation. This is Guanine nucleotide-binding protein-like 3 (GNL3) from Homo sapiens (Human).